We begin with the raw amino-acid sequence, 465 residues long: MSNLFKYLPSVDSVLTRLEEEGVIDGLPRTLSRDLVNGFLDVCREEIKGGIITEEKQLSPDVLFPRLTCHVRAGAKPHFRRVLNGTGVVVHTNLGRSLLAESAVKAVTEACACYSNLEFDLKTGERGSRYSHVEKLICEITGAEAALVVNNNASAVLITLETLAKGREAIVSRGQLVEIGGSFRIPDVMTKSGAFLREVGATNRTHLHDYENAINEETALLMKVHTSNFRVIGFTKEVSGGELAELGRKHDLPVYEDLGSGNLTNFSGLGLMREPTVQEVVAEDVDVVSFSGDKVLGGPQAGIIVGKKKYIDAIKKNPLNRAVRIDKMTLAALEATLRLYLDPETAKREVPTVRMITEKPENLKKQAQALARTLRRELGETANIGVREGVSRVGGGAFPEQDLKTFLVTVVPSAKVTVEELKEGLLSTEPPLVGRIEEDAFCLDPRTLTREEYKLCAEAINQILE.

K294 bears the N6-(pyridoxal phosphate)lysine mark.

It belongs to the SelA family. Requires pyridoxal 5'-phosphate as cofactor.

The protein resides in the cytoplasm. It carries out the reaction L-seryl-tRNA(Sec) + selenophosphate + H(+) = L-selenocysteinyl-tRNA(Sec) + phosphate. Its pathway is aminoacyl-tRNA biosynthesis; selenocysteinyl-tRNA(Sec) biosynthesis; selenocysteinyl-tRNA(Sec) from L-seryl-tRNA(Sec) (bacterial route): step 1/1. Its function is as follows. Converts seryl-tRNA(Sec) to selenocysteinyl-tRNA(Sec) required for selenoprotein biosynthesis. This chain is L-seryl-tRNA(Sec) selenium transferase, found in Maridesulfovibrio salexigens (strain ATCC 14822 / DSM 2638 / NCIMB 8403 / VKM B-1763) (Desulfovibrio salexigens).